The following is a 68-amino-acid chain: DNA-directed RNA polymerase subunit omega (68 aa).

It belongs to the RNA polymerase subunit omega family. The RNAP catalytic core consists of 2 alpha, 1 beta, 1 beta' and 1 omega subunit. When a sigma factor is associated with the core the holoenzyme is formed, which can initiate transcription.

It catalyses the reaction RNA(n) + a ribonucleoside 5'-triphosphate = RNA(n+1) + diphosphate. Functionally, promotes RNA polymerase assembly. Latches the N- and C-terminal regions of the beta' subunit thereby facilitating its interaction with the beta and alpha subunits. The chain is DNA-directed RNA polymerase subunit omega from Persephonella marina (strain DSM 14350 / EX-H1).